A 130-amino-acid polypeptide reads, in one-letter code: Small ribosomal subunit protein uS9 (130 aa).

It belongs to the universal ribosomal protein uS9 family.

The protein is Small ribosomal subunit protein uS9 of Pseudoalteromonas atlantica (strain T6c / ATCC BAA-1087).